The primary structure comprises 603 residues: Elongation factor 4 (603 aa).

One can recognise a tr-type G domain in the interval 7-191; that stretch reads DNIRNFSIVA…AIVTRLPPPQ (185 aa). Residues 19–24 and 138–141 each bind GTP; these read DHGKST and NKVD.

It belongs to the TRAFAC class translation factor GTPase superfamily. Classic translation factor GTPase family. LepA subfamily.

Its subcellular location is the cell inner membrane. It catalyses the reaction GTP + H2O = GDP + phosphate + H(+). Functionally, required for accurate and efficient protein synthesis under certain stress conditions. May act as a fidelity factor of the translation reaction, by catalyzing a one-codon backward translocation of tRNAs on improperly translocated ribosomes. Back-translocation proceeds from a post-translocation (POST) complex to a pre-translocation (PRE) complex, thus giving elongation factor G a second chance to translocate the tRNAs correctly. Binds to ribosomes in a GTP-dependent manner. The polypeptide is Elongation factor 4 (Rhodopseudomonas palustris (strain HaA2)).